Reading from the N-terminus, the 546-residue chain is Interleukin-20 receptor subunit alpha (546 aa).

An N-terminal signal peptide occupies residues Met1 to Ala32. The Extracellular portion of the chain corresponds to Val33–Lys253. Fibronectin type-III domains lie at Lys42–Thr138 and Gln139–Val245. Asn45, Asn86, Asn94, Asn185, and Asn203 each carry an N-linked (GlcNAc...) asparagine glycan. A disulfide bridge links Cys90 with Cys98. Cys218 and Cys239 form a disulfide bridge. A helical membrane pass occupies residues Val254–Tyr274. Topologically, residues Leu275–Ser546 are cytoplasmic.

This sequence belongs to the type II cytokine receptor family. As to quaternary structure, heterodimer with IL20RB and heterodimer with IL10RB.

It localises to the membrane. In terms of biological role, the IL20RA/IL20RB dimer is a receptor for IL19, IL20 and IL24. The IL20RA/IL10RB dimer is a receptor for IL26. This Mus musculus (Mouse) protein is Interleukin-20 receptor subunit alpha (Il20ra).